The following is a 624-amino-acid chain: Atypical kinase COQ8B, mitochondrial (624 aa).

A disordered region spans residues 90–117 (EMPPDFSSKDGRGETSETPVGAATGTIK). Residues 189–205 (LANFGGLAVGLGIGAIA) traverse the membrane as a helical segment. Residues 249–252 (KIGQ) carry the KxGQ motif motif. Positions 285–517 (MHKVLEEELG…ATVLKKSKDL (233 aa)) constitute a Protein kinase domain. The short motif at 310–313 (AAAS) is the AAAS motif element. Residues Ser-313, Lys-331, and 418–421 (MELV) each bind ATP. Residue Asp-461 is the Proton acceptor of the active site. Residues Asn-466 and Asp-480 each coordinate ATP.

It belongs to the protein kinase superfamily. ADCK protein kinase family. Homodimer; homodimerizes via its transmembrane region. Interacts with the multi-subunit COQ enzyme complex.

It is found in the mitochondrion membrane. It localises to the cytoplasm. The protein localises to the cytosol. The protein resides in the cell membrane. It functions in the pathway cofactor biosynthesis; ubiquinone biosynthesis. Its function is as follows. Atypical kinase involved in the biosynthesis of coenzyme Q, also named ubiquinone, an essential lipid-soluble electron transporter for aerobic cellular respiration. Its substrate specificity is still unclear: may act as a protein kinase that mediates phosphorylation of COQ3. According to other reports, acts as a small molecule kinase, possibly a lipid kinase that phosphorylates a prenyl lipid in the ubiquinone biosynthesis pathway, as suggested by its ability to bind coenzyme Q lipid intermediates. However, the small molecule kinase activity was not confirmed by another publication. Required for podocyte migration. In Danio rerio (Zebrafish), this protein is Atypical kinase COQ8B, mitochondrial.